The primary structure comprises 235 residues: Transmembrane protein 215 (235 aa).

Helical transmembrane passes span 12–32 and 40–60; these read LVVA…VSGM and IPLL…IALA. The tract at residues 99 to 145 is disordered; it reads SDLESGKGSSDELAKKAGLRGKPPPQSQGEVSVASSINSPTPTEEGE. A compositionally biased stretch (polar residues) spans 125-140; the sequence is SQGEVSVASSINSPTP.

The protein resides in the membrane. In Homo sapiens (Human), this protein is Transmembrane protein 215 (TMEM215).